A 430-amino-acid chain; its full sequence is Tyrosine--tRNA ligase (430 aa).

Y32 serves as a coordination point for L-tyrosine. Positions 37 to 46 match the 'HIGH' region motif; that stretch reads PTADSLHIGH. L-tyrosine-binding residues include Y172 and Q176. A 'KMSKS' region motif is present at residues 232–236; it reads KFGKT. K235 is a binding site for ATP. The S4 RNA-binding domain occupies 362 to 429; that stretch reads IKAVDLCTEK…GKKNYYLLIA (68 aa).

This sequence belongs to the class-I aminoacyl-tRNA synthetase family. TyrS type 1 subfamily. In terms of assembly, homodimer.

The protein localises to the cytoplasm. The enzyme catalyses tRNA(Tyr) + L-tyrosine + ATP = L-tyrosyl-tRNA(Tyr) + AMP + diphosphate + H(+). Functionally, catalyzes the attachment of tyrosine to tRNA(Tyr) in a two-step reaction: tyrosine is first activated by ATP to form Tyr-AMP and then transferred to the acceptor end of tRNA(Tyr). This is Tyrosine--tRNA ligase from Parabacteroides distasonis (strain ATCC 8503 / DSM 20701 / CIP 104284 / JCM 5825 / NCTC 11152).